Consider the following 480-residue polypeptide: MSLFDHGVAKLHTLLKEGEVTVTDLVKESFDRIEATDDQIGAFLTLNEDAFEQAKRMDELAKMSDNPLFGMPIGVKDNIVTKGMRTTCASTFLENFVPAHDATVVERLHDAGALTIGKLNMDEFAMGSSNENSAFKPVRNPWDPTRVPGGSSGGSAASVAAGQVLFSLGSDTGGSIRQPAAYCGVVGMKPTYGLVSRFGLVAFASSLDQIGPLTRTVEDNAYLLNTIAGHCDMDSTSAEVEVPDYTAALNQDLTGMKFALPEEFMAEGVAPGVREQIEKAIETLKSLGATIETVSIPSVKYALSAYYLLASSEASSNLARFDGIRYGRRAEADTLDEVFTYSREQGFGDEVKRRIMLGTYALSSGYYDAFYKKAQQVRTLMKQDFAKVFEEYDAIVGPTAPTTAFKLGEQLDDPLTMYANDIMTIPVNLVGIPAISVPAGLSEGLPVGLQIIGNYFDESTLYRVAHAFEQANGGFKMPQL.

Active-site charge relay system residues include lysine 76 and serine 151. The active-site Acyl-ester intermediate is serine 175.

This sequence belongs to the amidase family. GatA subfamily. As to quaternary structure, heterotrimer of A, B and C subunits.

The enzyme catalyses L-glutamyl-tRNA(Gln) + L-glutamine + ATP + H2O = L-glutaminyl-tRNA(Gln) + L-glutamate + ADP + phosphate + H(+). In terms of biological role, allows the formation of correctly charged Gln-tRNA(Gln) through the transamidation of misacylated Glu-tRNA(Gln) in organisms which lack glutaminyl-tRNA synthetase. The reaction takes place in the presence of glutamine and ATP through an activated gamma-phospho-Glu-tRNA(Gln). This chain is Glutamyl-tRNA(Gln) amidotransferase subunit A, found in Exiguobacterium sp. (strain ATCC BAA-1283 / AT1b).